A 184-amino-acid polypeptide reads, in one-letter code: FMRFamide-related peptides (184 aa).

Positions 1–44 (MLVSSSVLKDDSSLRIFKESPNEFEYIIKRHDMDDRKEDTESKE) are excised as a propeptide. At F56 the chain carries Phenylalanine amide. A propeptide spanning residues 59-83 (GQSFFNNLDNSAFDNEIDSKVSRHP) is cleaved from the precursor. F94 bears the Phenylalanine amide mark. The propeptide occupies 97-107 (SGMKSTNDEQP). F119 is modified (phenylalanine amide). A propeptide spanning residues 122-184 (NIQIVPTDFD…SLETNSNHRE (63 aa)) is cleaved from the precursor.

Belongs to the FARP (FMRFamide related peptide) family. As to expression, expressed throughout the central nervous system.

It localises to the secreted. In terms of biological role, in insects, FMRFamide and related peptides have modulatory actions at skeletal neuromuscular junctions, and peptides that are immunologically related to FMRFamide are released into the circulation from neurohemal organs. The chain is FMRFamide-related peptides from Camponotus floridanus (Florida carpenter ant).